Consider the following 162-residue polypeptide: Inorganic pyrophosphatase (162 aa).

Residue E8 coordinates Mg(2+). K16, R30, and Y42 together coordinate substrate. The Mg(2+) site is built by D52, D57, D84, and D89. Residue D89 is the Proton acceptor of the active site. Residue Y126 participates in substrate binding.

The protein belongs to the PPase family. In terms of assembly, homohexamer. Requires Mg(2+) as cofactor.

It is found in the cytoplasm. It catalyses the reaction diphosphate + H2O = 2 phosphate + H(+). Catalyzes the hydrolysis of inorganic pyrophosphate (PPi) forming two phosphate ions. The sequence is that of Inorganic pyrophosphatase from Mycobacterium leprae (strain TN).